A 151-amino-acid chain; its full sequence is UPF0178 protein PST_0536 (151 aa).

The protein belongs to the UPF0178 family.

The polypeptide is UPF0178 protein PST_0536 (Stutzerimonas stutzeri (strain A1501) (Pseudomonas stutzeri)).